The sequence spans 368 residues: 3-dehydroquinate synthase (368 aa).

NAD(+) contacts are provided by residues 112–116 (GVIGD), 136–137 (TT), Lys-149, Lys-158, and 176–179 (TLIT). Zn(2+) is bound by residues Glu-191, His-256, and His-273.

The protein belongs to the sugar phosphate cyclases superfamily. Dehydroquinate synthase family. Co(2+) is required as a cofactor. The cofactor is Zn(2+). Requires NAD(+) as cofactor.

The protein localises to the cytoplasm. It carries out the reaction 7-phospho-2-dehydro-3-deoxy-D-arabino-heptonate = 3-dehydroquinate + phosphate. The protein operates within metabolic intermediate biosynthesis; chorismate biosynthesis; chorismate from D-erythrose 4-phosphate and phosphoenolpyruvate: step 2/7. Its function is as follows. Catalyzes the conversion of 3-deoxy-D-arabino-heptulosonate 7-phosphate (DAHP) to dehydroquinate (DHQ). This is 3-dehydroquinate synthase from Prochlorococcus marinus (strain NATL2A).